The primary structure comprises 75 residues: Putative snRNP Sm-like protein (75 aa).

The Sm domain occupies 4-75 (RPLDVIHRSL…NVLAISPTEE (72 aa)).

The protein belongs to the snRNP Sm proteins family.

The polypeptide is Putative snRNP Sm-like protein (Pyrococcus abyssi (strain GE5 / Orsay)).